Here is a 178-residue protein sequence, read N- to C-terminus: ATP synthase subunit delta (178 aa).

Belongs to the ATPase delta chain family. In terms of assembly, F-type ATPases have 2 components, F(1) - the catalytic core - and F(0) - the membrane proton channel. F(1) has five subunits: alpha(3), beta(3), gamma(1), delta(1), epsilon(1). F(0) has three main subunits: a(1), b(2) and c(10-14). The alpha and beta chains form an alternating ring which encloses part of the gamma chain. F(1) is attached to F(0) by a central stalk formed by the gamma and epsilon chains, while a peripheral stalk is formed by the delta and b chains.

The protein localises to the cell inner membrane. Its function is as follows. F(1)F(0) ATP synthase produces ATP from ADP in the presence of a proton or sodium gradient. F-type ATPases consist of two structural domains, F(1) containing the extramembraneous catalytic core and F(0) containing the membrane proton channel, linked together by a central stalk and a peripheral stalk. During catalysis, ATP synthesis in the catalytic domain of F(1) is coupled via a rotary mechanism of the central stalk subunits to proton translocation. This protein is part of the stalk that links CF(0) to CF(1). It either transmits conformational changes from CF(0) to CF(1) or is implicated in proton conduction. The polypeptide is ATP synthase subunit delta (Hahella chejuensis (strain KCTC 2396)).